The sequence spans 153 residues: MKHVHIFTDGACSGNPGPGGWGAVLRYGDVEKEMSGGEAETTNNRMELLAAISALNALRQPCEVDLHTDSKYVMDGISKWIHGWKRNGWKTGDRKPVKNGELWQALDEARNRHNVTWHWVKGHAGHPENERADELARKGMEPFKKARRADAVK.

Residues Met1 to Glu141 form the RNase H type-1 domain. Mg(2+)-binding residues include Asp9, Glu47, Asp69, and Asp133. Positions His123–Lys153 are disordered. The segment covering Gly125 to Lys153 has biased composition (basic and acidic residues).

This sequence belongs to the RNase H family. As to quaternary structure, monomer. Mg(2+) is required as a cofactor.

Its subcellular location is the cytoplasm. The enzyme catalyses Endonucleolytic cleavage to 5'-phosphomonoester.. In terms of biological role, endonuclease that specifically degrades the RNA of RNA-DNA hybrids. The sequence is that of Ribonuclease H from Rhizobium meliloti (strain 1021) (Ensifer meliloti).